The chain runs to 1700 residues: Leucine-rich repeat-containing protein 37A2 (1700 aa).

The N-terminal stretch at 1-35 (MSSAQCPALVCVMSRLRFWGPWPLLMWQLLWLLVK) is a signal peptide. Residues 36–1582 (EAQPLEWVKD…VPGYGYTDKL (1547 aa)) lie on the Extracellular side of the membrane. Residues 54-65 (LGPPDSWSSHSS) show a composition bias toward polar residues. Disordered stretches follow at residues 54–104 (LGPP…ESTE), 130–156 (QQDL…DPAQ), 169–534 (QLST…AQPP), 559–580 (TEVE…KVVP), 619–642 (PEPT…KHPE), and 729–752 (TKPT…PDLG). Residues 137–160 (LSPQERLPVSPKKLKKDPAQRWSL) form an LRR 1 repeat. Composition is skewed to polar residues over residues 169-189 (QLST…STDT) and 223-237 (ETQN…QSSS). LRR repeat units follow at residues 230–253 (LEDI…LEEE) and 267–290 (ESSM…EDQA). Positions 238–249 (LQQEAPAQLPQL) are enriched in low complexity. The N-linked (GlcNAc...) asparagine glycan is linked to N296. Residues 307 to 326 (TITSEPTNETESSQAQQETP) are compositionally biased toward polar residues. Low complexity predominate over residues 358–368 (SEQQQPVQPSE). Residues 433-446 (LVHQEATTRLSGSG) are compositionally biased toward polar residues. Over residues 482–493 (SPEPINNENPSP) the composition is skewed to low complexity. Residues 729–749 (TKPTTEVKPSPTTEETSTQPP) are compositionally biased toward low complexity. LRR repeat units follow at residues 864-887 (NGTF…VWKA), 888-911 (YSWT…SFEG), 912-935 (LLSL…TFEP), 937-959 (PFLK…TFQA), 963-987 (MQFL…LFKL), and 1002-1027 (LTTL…MACC). N1079 carries N-linked (GlcNAc...) asparagine glycosylation. Residues 1124 to 1146 (LPYFSAVNLDVKSLLLPFIKLPT) form an LRR 10 repeat. 2 stretches are compositionally biased toward basic and acidic residues: residues 1182–1191 (VGRQSIRREQ) and 1201–1216 (AEEK…EVEQ). Disordered regions lie at residues 1182-1227 (VGRQ…EKLA) and 1309-1328 (KTRS…PKVR). The helical transmembrane segment at 1583-1603 (ILALIVTGILTILIILFCLIV) threads the bilayer. Topologically, residues 1604 to 1700 (ICCHRRSLQE…TEEEESEALP (97 aa)) are cytoplasmic. The span at 1675–1685 (NEDKILNRDPG) shows a compositional bias: basic and acidic residues. The tract at residues 1675 to 1700 (NEDKILNRDPGDSEAPTEEEESEALP) is disordered. The span at 1689–1700 (APTEEEESEALP) shows a compositional bias: acidic residues.

This sequence belongs to the LRRC37A family.

The protein resides in the membrane. This chain is Leucine-rich repeat-containing protein 37A2 (LRRC37A2), found in Homo sapiens (Human).